The sequence spans 231 residues: MSLKIPEHVAIIMDGNGRWARKRGLPRIAGHYKGAEVAEDIVEFAIELGIKHLTLFAFSTENWNRPKGEVEALFELLRRYLQTKKDKLYKLGIRVRFIGRRDRINKELVKLMQEIEEESKKFKNLFLNLAVDYGGRDDILRAVKKAVKLQREEITEELFSSLLDLSCSPDPDLLIRTAGEKRISNFLLWNLAYTELYFSETLWPDFSREEFLKALEDFSRRKRKFGRVLDE.

D14 is a catalytic residue. D14 serves as a coordination point for Mg(2+). Residues 15–18 (GNGR), W19, R27, H31, and 59–61 (STE) each bind substrate. N62 functions as the Proton acceptor in the catalytic mechanism. Substrate contacts are provided by residues W63, R65, R176, and 182–184 (RIS). Residue E195 coordinates Mg(2+).

This sequence belongs to the UPP synthase family. Homodimer. Requires Mg(2+) as cofactor.

Its function is as follows. Catalyzes the condensation of isopentenyl diphosphate (IPP) with allylic pyrophosphates generating different type of terpenoids. In Aquifex pyrophilus, this protein is Isoprenyl transferase.